Consider the following 153-residue polypeptide: Endoribonuclease YbeY (153 aa).

Zn(2+) contacts are provided by His118, His122, and His128.

It belongs to the endoribonuclease YbeY family. It depends on Zn(2+) as a cofactor.

The protein resides in the cytoplasm. Single strand-specific metallo-endoribonuclease involved in late-stage 70S ribosome quality control and in maturation of the 3' terminus of the 16S rRNA. The polypeptide is Endoribonuclease YbeY (Chloroflexus aggregans (strain MD-66 / DSM 9485)).